Reading from the N-terminus, the 729-residue chain is Adenosylcobalamin-dependent ribonucleoside-triphosphate reductase (729 aa).

Residues C189 and C438 are joined by a disulfide bond. Active-site residues include C427 and E429.

This sequence belongs to the class II ribonucleoside-triphosphate reductase family. Monomer. Adenosylcob(III)alamin is required as a cofactor.

It catalyses the reaction a 2'-deoxyribonucleoside 5'-triphosphate + [thioredoxin]-disulfide + H2O = a ribonucleoside 5'-triphosphate + [thioredoxin]-dithiol. This is Adenosylcobalamin-dependent ribonucleoside-triphosphate reductase (rnr) from Euglena gracilis.